The chain runs to 1100 residues: Regulator of nonsense transcripts 1 (1100 aa).

Over residues 42–53 (SQTQTQGQTQSQ) the composition is skewed to low complexity. The segment at 42–67 (SQTQTQGQTQSQLDNQVNGPDGVLPN) is disordered. The 158-residue stretch at 94–251 (TKDLPVHACS…NKLEELWKEN (158 aa)) folds into the Upf1 CH-rich domain. 12 residues coordinate Zn(2+): Cys102, Cys105, Cys116, Ser119, Cys124, His134, His138, Cys144, Cys162, Cys165, Cys188, and Cys192. Residues 102–134 (CSYCGIHDPACVVYCNTSKKWFCNGRGNTSGSH) are C3H. Positions 116 to 144 (CNTSKKWFCNGRGNTSGSHIVNHLVRAKC) are CC/SHH/C. The C4 stretch occupies residues 162–192 (CYNCGCRNVFLLGFIPAKADSVVVLLCRQPC). Residues Gln455, 475 to 479 (GTGKT), Gln645, Tyr682, and Glu813 each bind ATP. The interval 978 to 1065 (LGQVNGPAAG…QPELSQDSYL (88 aa)) is disordered. Low complexity predominate over residues 982–993 (NGPAAGRGAPKG). Over residues 1012-1063 (SGQPNMPNSQASQDLVSQPFSQGPLTQGYITMSQPSQMSQPGLSQPELSQDS) the composition is skewed to polar residues.

The protein belongs to the DNA2/NAM7 helicase family.

It is found in the cytoplasm. It localises to the P-body. The protein localises to the nucleus. The protein resides in the perinuclear region. In terms of biological role, RNA-dependent helicase and ATPase required for nonsense-mediated decay (NMD) of mRNAs containing premature stop codons. Is recruited to mRNAs upon translation termination and undergoes a cycle of phosphorylation and dephosphorylation; its phosphorylation appears to be a key step in NMD. The formation of an upf1-upf2-upf3 surveillance complex is believed to activate NMD. This chain is Regulator of nonsense transcripts 1, found in Danio rerio (Zebrafish).